The following is a 210-amino-acid chain: Na(+)-translocating NADH-quinone reductase subunit D (210 aa).

The next 5 helical transmembrane spans lie at phenylalanine 42–isoleucine 62, isoleucine 72–alanine 92, valine 103–methionine 123, leucine 131–phenylalanine 151, and asparagine 178–isoleucine 198.

It belongs to the NqrDE/RnfAE family. As to quaternary structure, composed of six subunits; NqrA, NqrB, NqrC, NqrD, NqrE and NqrF.

It is found in the cell inner membrane. The enzyme catalyses a ubiquinone + n Na(+)(in) + NADH + H(+) = a ubiquinol + n Na(+)(out) + NAD(+). Functionally, NQR complex catalyzes the reduction of ubiquinone-1 to ubiquinol by two successive reactions, coupled with the transport of Na(+) ions from the cytoplasm to the periplasm. NqrA to NqrE are probably involved in the second step, the conversion of ubisemiquinone to ubiquinol. The sequence is that of Na(+)-translocating NADH-quinone reductase subunit D from Vibrio vulnificus (strain CMCP6).